Here is a 152-residue protein sequence, read N- to C-terminus: uncharacterized protein (152 aa).

This is an uncharacterized protein from Brachyspira hyodysenteriae (Treponema hyodysenteriae).